Here is a 134-residue protein sequence, read N- to C-terminus: ATP synthase epsilon chain (134 aa).

The protein belongs to the ATPase epsilon chain family. In terms of assembly, F-type ATPases have 2 components, CF(1) - the catalytic core - and CF(0) - the membrane proton channel. CF(1) has five subunits: alpha(3), beta(3), gamma(1), delta(1), epsilon(1). CF(0) has three main subunits: a, b and c.

The protein localises to the cellular thylakoid membrane. Produces ATP from ADP in the presence of a proton gradient across the membrane. This Prochlorococcus marinus (strain AS9601) protein is ATP synthase epsilon chain.